The sequence spans 148 residues: Hemoglobin subunit beta (148 aa).

The region spanning 3-148 (XWTDXERHVI…AVAALGKQYH (146 aa)) is the Globin domain. Residues H64 and H93 each coordinate heme b.

This sequence belongs to the globin family. Heterotetramer of two alpha chains and two beta chains. In terms of tissue distribution, red blood cells.

Functionally, involved in oxygen transport from gills to the various peripheral tissues. This is Hemoglobin subunit beta (hbb) from Silurus asotus (Amur catfish).